The chain runs to 756 residues: Disintegrin and metalloproteinase domain-containing protein 5 (756 aa).

A signal peptide spans 1 to 16 (MFLLLVLLTGLGGMHA). Residues 17-142 (DLNPHKTFLQ…AVSGFIHKIY (126 aa)) constitute a propeptide that is removed on maturation. At 17-698 (DLNPHKTFLQ…GRHAPFQKQR (682 aa)) the chain is on the extracellular side. In terms of domain architecture, Peptidase M12B spans 183 to 380 (RYIEMHIVVD…NGLTCLQTNP (198 aa)). Cystine bridges form between C292–C375, C334–C359, C336–C341, and C449–C470. Positions 389-478 (RRICGNGLLE…YCLLDTYVRD (90 aa)) constitute a Disintegrin domain. An N-linked (GlcNAc...) asparagine glycan is attached at N559. The region spanning 630 to 664 (DFETCEASIECSGHGICNNFNHCHCEKGYNPPHCK) is the EGF-like domain. 3 disulfide bridges follow: C634–C646, C640–C652, and C654–C663. The chain crosses the membrane as a helical span at residues 699–719 (FQLIFYISLPVLIITTAILIK). The Cytoplasmic portion of the chain corresponds to 720–756 (RKKLRELCYRGETESESSVSQESSSNSKSSLSESTSL). The interval 731–756 (ETESESSVSQESSSNSKSSLSESTSL) is disordered. Residues 735–756 (ESSVSQESSSNSKSSLSESTSL) show a composition bias toward low complexity.

As to quaternary structure, interacts with TEX101. In terms of processing, subject to proteolytic processing during epididymal transit of spermatozoa. As to expression, detected in testis (at protein level). Detected in adult and prepubertal testis. Detected at very low levels in heart, kidney, brain, muscle ovary and uterus.

The protein localises to the membrane. In terms of biological role, this is a non catalytic metalloprotease-like protein. May play a role in sperm-egg fusion. The chain is Disintegrin and metalloproteinase domain-containing protein 5 (ADAM5) from Macaca fascicularis (Crab-eating macaque).